A 424-amino-acid chain; its full sequence is MFLLPRFVLVSCIIGSLGFENPPTNVVSHLNGDWFLFGDSRSDCNHVVNTNPRNYSYMDLNPALCDSGKISSKAGNSIFRSFHFTDFYNYTGEGQQIIFYEGVNFTPYHAFKCTTSGSNDIWMQNKGLFYTQVYKNMAVYRSLTFVNVPYVYNGSAQSTALCKSGSLVLNNPAYIAREANFGDYYYKVEADFYLSGCDEYIVPLCIFNGKFLSNTKYYDDSQYYFNKDTGVIYGLNSTETITTGFDFNCHYLVLPSGNYLAISNELLLTVPTKAICLNKRKDFTPVQVVDSRWNNARQSDNMTAVACQPPYCYFRNSTTNYVGVYDINHGDAGFTSILSGLLYDSPCFSQQGVFRYNNVSSVWPLYPYGRCPTAADINTPDVPICVYDPLPLILLGILLGVAVIIIVVLLLYFMVDNGTRLHDA.

The signal sequence occupies residues 1-16 (MFLLPRFVLVSCIIGS). Residues 7-127 (FVLVSCIIGS…SNDIWMQNKG (121 aa)) are esterase domain 1. Topologically, residues 17-392 (LGFENPPTNV…PICVYDPLPL (376 aa)) are virion surface. S40 (nucleophile) is an active-site residue. A disulfide bridge connects residues C44 and C65. Residues N54, N89, N153, N236, and N301 are each glycosylated (N-linked (GlcNAc...) asparagine; by host). 3 disulfide bridges follow: C113–C162, C197–C276, and C205–C249. The tract at residues 128–266 (LFYTQVYKNM…GNYLAISNEL (139 aa)) is receptor binding. The tract at residues 267 to 379 (LLTVPTKAIC…RCPTAADINT (113 aa)) is esterase domain 2. C307 and C312 form a disulfide bridge. The N-linked (GlcNAc...) asparagine; by host glycan is linked to N316. Residues D326 and H329 each act as charge relay system in the active site. Residues C347 and C371 are joined by a disulfide bond. N-linked (GlcNAc...) asparagine; by host glycosylation is present at N358. The chain crosses the membrane as a helical span at residues 393-413 (ILLGILLGVAVIIIVVLLLYF). At 414 to 424 (MVDNGTRLHDA) the chain is on the intravirion side. N-linked (GlcNAc...) asparagine; by host glycosylation is present at N417.

Belongs to the influenza type C/coronaviruses hemagglutinin-esterase family. Homodimer; disulfide-linked. Forms a complex with the M protein in the pre-Golgi. Associates then with S-M complex to form a ternary complex S-M-HE. In terms of processing, N-glycosylated in the host RER.

The protein localises to the virion membrane. It is found in the host cell membrane. It catalyses the reaction N-acetyl-9-O-acetylneuraminate + H2O = N-acetylneuraminate + acetate + H(+). It carries out the reaction N-acetyl-4-O-acetylneuraminate + H2O = N-acetylneuraminate + acetate + H(+). Structural protein that makes short spikes at the surface of the virus. Contains receptor binding and receptor-destroying activities. Mediates de-O-acetylation of N-acetyl-4-O-acetylneuraminic acid, which is probably the receptor determinant recognized by the virus on the surface of erythrocytes and susceptible cells. This receptor-destroying activity is important for virus release as it probably helps preventing self-aggregation and ensures the efficient spread of the progeny virus from cell to cell. May serve as a secondary viral attachment protein for initiating infection, the spike protein being the major one. May become a target for both the humoral and the cellular branches of the immune system. The chain is Hemagglutinin-esterase from Bovine coronavirus (strain G95) (BCoV).